The primary structure comprises 344 residues: uncharacterized protein (344 aa).

It belongs to the MG414/MG415 family.

This is an uncharacterized protein from Mycoplasma pneumoniae (strain ATCC 29342 / M129 / Subtype 1) (Mycoplasmoides pneumoniae).